The chain runs to 301 residues: Glycine--tRNA ligase alpha subunit (301 aa).

This sequence belongs to the class-II aminoacyl-tRNA synthetase family. Tetramer of two alpha and two beta subunits.

The protein resides in the cytoplasm. The enzyme catalyses tRNA(Gly) + glycine + ATP = glycyl-tRNA(Gly) + AMP + diphosphate. This Shewanella oneidensis (strain ATCC 700550 / JCM 31522 / CIP 106686 / LMG 19005 / NCIMB 14063 / MR-1) protein is Glycine--tRNA ligase alpha subunit.